Here is a 61-residue protein sequence, read N- to C-terminus: Adipokinetic prohormone type 2 (61 aa).

The signal sequence occupies residues M1–A22. Residue Q23 is modified to Pyrrolidone carboxylic acid. Position 30 is a tryptophan amide (W30).

This sequence belongs to the AKH/HRTH/RPCH family. Adipokinetic hormone precursor-related peptide (APRP) can form three type of disulfide-bond dimers: p1 (alpha-alpha), p2 (alpha-beta), and p3 (beta-beta).

The protein localises to the secreted. Its function is as follows. This hormone, released from cells in the corpora cardiaca, causes release of diglycerides from the fat body and stimulation of muscles to use these diglycerides as an energy source during energy-demanding processes. In Schistocerca nitens (Vagrant locust), this protein is Adipokinetic prohormone type 2.